The primary structure comprises 142 residues: Galactose-6-phosphate isomerase subunit LacA (142 aa).

Belongs to the LacAB/RpiB family. As to quaternary structure, heteromultimeric protein consisting of LacA and LacB.

The enzyme catalyses aldehydo-D-galactose 6-phosphate = keto-D-tagatose 6-phosphate. It participates in carbohydrate metabolism; D-galactose 6-phosphate degradation; D-tagatose 6-phosphate from D-galactose 6-phosphate: step 1/1. In Streptococcus mutans serotype c (strain ATCC 700610 / UA159), this protein is Galactose-6-phosphate isomerase subunit LacA.